Reading from the N-terminus, the 231-residue chain is 7-cyano-7-deazaguanine synthase (231 aa).

8 to 18 (FSGGQDSTTCL) is an ATP binding site. Zn(2+)-binding residues include Cys188, Cys197, Cys200, and Cys203.

This sequence belongs to the QueC family. Requires Zn(2+) as cofactor.

It catalyses the reaction 7-carboxy-7-deazaguanine + NH4(+) + ATP = 7-cyano-7-deazaguanine + ADP + phosphate + H2O + H(+). Its pathway is purine metabolism; 7-cyano-7-deazaguanine biosynthesis. In terms of biological role, catalyzes the ATP-dependent conversion of 7-carboxy-7-deazaguanine (CDG) to 7-cyano-7-deazaguanine (preQ(0)). The polypeptide is 7-cyano-7-deazaguanine synthase (Shigella flexneri serotype 5b (strain 8401)).